The sequence spans 490 residues: ATP synthase subunit beta, chloroplastic (490 aa).

A Phosphothreonine modification is found at T6. S13 is subject to Phosphoserine. An ATP-binding site is contributed by 172 to 179 (GGAGVGKT).

It belongs to the ATPase alpha/beta chains family. F-type ATPases have 2 components, CF(1) - the catalytic core - and CF(0) - the membrane proton channel. CF(1) has five subunits: alpha(3), beta(3), gamma(1), delta(1), epsilon(1). CF(0) has four main subunits: a(1), b(1), b'(1) and c(9-12).

It is found in the plastid. The protein localises to the chloroplast thylakoid membrane. The catalysed reaction is ATP + H2O + 4 H(+)(in) = ADP + phosphate + 5 H(+)(out). Its function is as follows. Produces ATP from ADP in the presence of a proton gradient across the membrane. The catalytic sites are hosted primarily by the beta subunits. The protein is ATP synthase subunit beta, chloroplastic of Aethionema grandiflorum (Persian stone-cress).